A 274-amino-acid polypeptide reads, in one-letter code: 3-methyl-2-oxobutanoate hydroxymethyltransferase (274 aa).

2 residues coordinate Mg(2+): D49 and D88. Residues 49-50 (DS), D88, and K118 each bind 3-methyl-2-oxobutanoate. E120 is a Mg(2+) binding site. The Proton acceptor role is filled by E187.

The protein belongs to the PanB family. Homodecamer; pentamer of dimers. Mg(2+) serves as cofactor.

It is found in the cytoplasm. It catalyses the reaction 3-methyl-2-oxobutanoate + (6R)-5,10-methylene-5,6,7,8-tetrahydrofolate + H2O = 2-dehydropantoate + (6S)-5,6,7,8-tetrahydrofolate. It participates in cofactor biosynthesis; (R)-pantothenate biosynthesis; (R)-pantoate from 3-methyl-2-oxobutanoate: step 1/2. In terms of biological role, catalyzes the reversible reaction in which hydroxymethyl group from 5,10-methylenetetrahydrofolate is transferred onto alpha-ketoisovalerate to form ketopantoate. The sequence is that of 3-methyl-2-oxobutanoate hydroxymethyltransferase from Rhodopseudomonas palustris (strain TIE-1).